A 64-amino-acid chain; its full sequence is Large ribosomal subunit protein bL35c (64 aa).

Belongs to the bacterial ribosomal protein bL35 family.

It is found in the plastid. The protein resides in the chloroplast. The protein is Large ribosomal subunit protein bL35c of Trieres chinensis (Marine centric diatom).